Reading from the N-terminus, the 1148-residue chain is Putative transcription factor SEF1 (1148 aa).

Residues 1–51 are disordered; sequence MVKDNRDSDQDQDFSSAHMKRQPEQQQLQQHQFPSKKQRISHHDDSHQINH. The residue at position 8 (Ser-8) is a Phosphoserine. The zn(2)-C6 fungal-type DNA-binding region spans 57–87; sequence CTHCRQHKIKCDASQNFPHPCSRCEKIGLHC. Positions 148-180 are disordered; sequence PTPGTIIPNPDSSPSSGSPTSSAAQRDSKVSVQ. Residues 150–169 show a composition bias toward low complexity; sequence PGTIIPNPDSSPSSGSPTSS. A Phosphoserine modification is found at Ser-263. The segment at 524–550 is disordered; the sequence is EESEEDNNDSIDNNNNDKRNKKDEPHV. Over residues 538 to 550 the composition is skewed to basic and acidic residues; the sequence is NNDKRNKKDEPHV. A Phosphoserine modification is found at Ser-806. Polar residues predominate over residues 1029 to 1050; it reads RSQSSMSHSRTPIASKSNNMTD. Positions 1029-1063 are disordered; sequence RSQSSMSHSRTPIASKSNNMTDLHSVVSDPGSSKS.

Its subcellular location is the nucleus. In terms of biological role, putative transcription factor that seems to be involved in the sporulation process. Suppresses the lethal phenotype of RPM2 deletion. In Saccharomyces cerevisiae (strain ATCC 204508 / S288c) (Baker's yeast), this protein is Putative transcription factor SEF1 (SEF1).